Reading from the N-terminus, the 529-residue chain is UDP-glucuronosyltransferase 2B11 (529 aa).

A signal peptide spans 1–21 (MTLKWTSVLLLIHLSCYFSSG). Lys-135 is modified (N6-succinyllysine). N-linked (GlcNAc...) asparagine glycosylation occurs at Asn-315. The chain crosses the membrane as a helical span at residues 493–513 (VIGFLLACVATVIFIITKFCL).

The protein belongs to the UDP-glycosyltransferase family. Widely expressed.

The protein resides in the microsome membrane. It is found in the endoplasmic reticulum membrane. It carries out the reaction glucuronate acceptor + UDP-alpha-D-glucuronate = acceptor beta-D-glucuronoside + UDP + H(+). In terms of biological role, UDPGT is of major importance in the conjugation and subsequent elimination of potentially toxic xenobiotics and endogenous compounds. This is UDP-glucuronosyltransferase 2B11 (UGT2B11) from Homo sapiens (Human).